We begin with the raw amino-acid sequence, 193 residues long: Ion-translocating oxidoreductase complex subunit A (193 aa).

Transmembrane regions (helical) follow at residues 5–25, 47–67, 72–92, 102–122, 134–154, and 171–191; these read LLLFVGTVLVNNFVLVKFLGL, FVMTLASICAWLIDTWILIPL, LRTLAFILVIAVVVQFTEMVV, LLGIFLPLITTNCAVLGVALL, ALYGFSAAVGFSLVMVLFAAI, and AIALITAGLMSLAFMGFSGLV.

The protein belongs to the NqrDE/RnfAE family. The complex is composed of six subunits: RnfA, RnfB, RnfC, RnfD, RnfE and RnfG.

It is found in the cell inner membrane. Its function is as follows. Part of a membrane-bound complex that couples electron transfer with translocation of ions across the membrane. This Citrobacter koseri (strain ATCC BAA-895 / CDC 4225-83 / SGSC4696) protein is Ion-translocating oxidoreductase complex subunit A.